The following is a 419-amino-acid chain: 4-hydroxyphenylpyruvate dioxygenase (419 aa).

2 VOC domains span residues 41-187 (GYHH…FIQR) and 218-376 (AIDH…LFTK). Positions 221, 304, and 387 each coordinate Fe cation.

The protein belongs to the 4HPPD family. It depends on Fe cation as a cofactor.

The enzyme catalyses 3-(4-hydroxyphenyl)pyruvate + O2 = homogentisate + CO2. The protein operates within amino-acid degradation; L-phenylalanine degradation; acetoacetate and fumarate from L-phenylalanine: step 3/6. This chain is 4-hydroxyphenylpyruvate dioxygenase (HPPD), found in Zymoseptoria tritici (Speckled leaf blotch fungus).